Here is a 100-residue protein sequence, read N- to C-terminus: Large ribosomal subunit protein uL23 (100 aa).

It belongs to the universal ribosomal protein uL23 family. In terms of assembly, part of the 50S ribosomal subunit. Contacts protein L29, and trigger factor when it is bound to the ribosome.

In terms of biological role, one of the early assembly proteins it binds 23S rRNA. One of the proteins that surrounds the polypeptide exit tunnel on the outside of the ribosome. Forms the main docking site for trigger factor binding to the ribosome. The chain is Large ribosomal subunit protein uL23 from Mycobacteroides abscessus (strain ATCC 19977 / DSM 44196 / CCUG 20993 / CIP 104536 / JCM 13569 / NCTC 13031 / TMC 1543 / L948) (Mycobacterium abscessus).